The chain runs to 134 residues: Large ribosomal subunit protein uL16c (134 aa).

The protein belongs to the universal ribosomal protein uL16 family. In terms of assembly, part of the 50S ribosomal subunit.

The protein localises to the plastid. The protein resides in the chloroplast. This is Large ribosomal subunit protein uL16c from Guillardia theta (Cryptophyte).